The primary structure comprises 305 residues: Putative monooxygenase p33MONOX (305 aa).

Residues 37-56 (LEDPAPMTPPPSDMGSVPWK) form a disordered region. Thr44 bears the Phosphothreonine mark. Positions 67-77 (LAKVEEGEASL) match the Flavin-containing monooxygenase motif motif. Disordered stretches follow at residues 158–236 (QSGE…KYDS) and 259–305 (QANR…PTGF). The span at 169–183 (PASAQSTPSTTPHSS) shows a compositional bias: low complexity. Position 175 is a phosphothreonine (Thr175). Ser182 and Ser183 each carry phosphoserine. Over residues 193–210 (TSGSSTALPGPNPSTMDS) the composition is skewed to polar residues.

It belongs to the P33MONOX family. As to quaternary structure, interacts with NELFB, NOL12 and PRNP. Down-regulated in the occipital lobe of an early stage Alzheimer disease patients.

The protein resides in the cytoplasm. Potential NADPH-dependent oxidoreductase. May be involved in the regulation of neuronal survival, differentiation and axonal outgrowth. The chain is Putative monooxygenase p33MONOX (KIAA1191) from Homo sapiens (Human).